Consider the following 476-residue polypeptide: Adenosylhomocysteinase (476 aa).

The substrate site is built by threonine 67, aspartate 142, and glutamate 202. Threonine 203–threonine 205 provides a ligand contact to NAD(+). Substrate contacts are provided by lysine 232 and aspartate 236. Residues asparagine 237, glycine 266 to glycine 271, glutamate 289, asparagine 324, isoleucine 345 to histidine 347, and asparagine 390 each bind NAD(+).

It belongs to the adenosylhomocysteinase family. It depends on NAD(+) as a cofactor.

It localises to the cytoplasm. The catalysed reaction is S-adenosyl-L-homocysteine + H2O = L-homocysteine + adenosine. The protein operates within amino-acid biosynthesis; L-homocysteine biosynthesis; L-homocysteine from S-adenosyl-L-homocysteine: step 1/1. Its function is as follows. May play a key role in the regulation of the intracellular concentration of adenosylhomocysteine. The chain is Adenosylhomocysteinase from Synechococcus sp. (strain CC9311).